The chain runs to 407 residues: MFKYILKRLGLAVVAMFIVMSIVFFLVNATGNVPLSATSARDIAAVQAQLQEFGFNDPIIVRYFRYWAKLFSFQADALGIYYANPNQTIGEIVFARVPNTLYVVLISFLIGSLLGIFLGMVSGLNRGKFLDAAINVLVVLFVSIPSFVVGLGLLKLAGFLNLPPRFINFDDAFFSFDRFLLASIIPILSLVFYSSAAFTYRIRNEVVEVMNQDYIKTAKSKGLGMFAVARYHIFRNSIIPSIPLFVFGISGAFSGGFIIESLFGVQGVSRILIDSVQVNETNMVMFNILFIQGIPLLASVFIEFIYVLVDPRIRIANSSNVSLLTKLKFLSSRHQWLMKWNKINSDNAQNIVFNSPLHHQLLELNAIDYKTKTVQLTTEQKTALNISATANFILLGNKCLKLKTIHG.

Transmembrane regions (helical) follow at residues 9 to 29 (LGLAVVAMFIVMSIVFFLVNA), 101 to 121 (LYVVLISFLIGSLLGIFLGMV), 134 to 154 (INVLVVLFVSIPSFVVGLGLL), 179 to 199 (FLLASIIPILSLVFYSSAAFT), 238 to 258 (IIPSIPLFVFGISGAFSGGFI), and 288 to 308 (ILFIQGIPLLASVFIEFIYVL). An ABC transmembrane type-1 domain is found at 97-307 (VPNTLYVVLI…ASVFIEFIYV (211 aa)).

This sequence belongs to the binding-protein-dependent transport system permease family. OppBC subfamily. In terms of assembly, the complex is composed of two ATP-binding proteins (OppD and OppF), two transmembrane proteins (OppB and OppC) and a solute-binding protein (OppA).

The protein localises to the cell membrane. In terms of biological role, part of the ABC transporter complex OppABCDF involved in the uptake of oligopeptides. Probably responsible for the translocation of the substrate across the membrane. The sequence is that of Oligopeptide transport system permease protein OppB (oppB) from Mycoplasma genitalium (strain ATCC 33530 / DSM 19775 / NCTC 10195 / G37) (Mycoplasmoides genitalium).